Here is an 84-residue protein sequence, read N- to C-terminus: UPF0457 protein BT9727_2307 (84 aa).

It belongs to the UPF0457 family.

The chain is UPF0457 protein BT9727_2307 from Bacillus thuringiensis subsp. konkukian (strain 97-27).